The primary structure comprises 204 residues: Large ribosomal subunit protein eL15 (204 aa).

It belongs to the eukaryotic ribosomal protein eL15 family. As to quaternary structure, component of the large ribosomal subunit.

The protein localises to the cytoplasm. In terms of biological role, component of the large ribosomal subunit. The ribosome is a large ribonucleoprotein complex responsible for the synthesis of proteins in the cell. This chain is Large ribosomal subunit protein eL15 (rpl15), found in Tachysurus fulvidraco (Yellow catfish).